Here is a 293-residue protein sequence, read N- to C-terminus: Homoserine kinase (293 aa).

ATP is bound at residue 83-93 (PITRGMGSSSA).

The protein belongs to the GHMP kinase family. Homoserine kinase subfamily.

It localises to the cytoplasm. The enzyme catalyses L-homoserine + ATP = O-phospho-L-homoserine + ADP + H(+). It participates in amino-acid biosynthesis; L-threonine biosynthesis; L-threonine from L-aspartate: step 4/5. Its function is as follows. Catalyzes the ATP-dependent phosphorylation of L-homoserine to L-homoserine phosphate. This is Homoserine kinase from Helicobacter pylori (strain J99 / ATCC 700824) (Campylobacter pylori J99).